The sequence spans 200 residues: Fibrillarin-like rRNA/tRNA 2'-O-methyltransferase (200 aa).

S-adenosyl-L-methionine-binding positions include 62-63 (TT), 78-79 (EF), 103-104 (DA), and 123-126 (DVAQ).

This sequence belongs to the methyltransferase superfamily. Fibrillarin family. In terms of assembly, interacts with nop5. Component of box C/D small ribonucleoprotein (sRNP) particles that contain rpl7ae, FlpA and nop5, plus a guide RNA.

Its function is as follows. Involved in pre-rRNA and tRNA processing. Utilizes the methyl donor S-adenosyl-L-methionine to catalyze the site-specific 2'-hydroxyl methylation of ribose moieties in rRNA and tRNA. Site specificity is provided by a guide RNA that base pairs with the substrate. Methylation occurs at a characteristic distance from the sequence involved in base pairing with the guide RNA. The sequence is that of Fibrillarin-like rRNA/tRNA 2'-O-methyltransferase from Methanoculleus marisnigri (strain ATCC 35101 / DSM 1498 / JR1).